The following is a 720-amino-acid chain: Putative fatty acid oxidation complex trifunctional enzyme (720 aa).

The 3-hydroxyacyl-CoA dehydrogenase stretch occupies residues 1 to 384; it reads MQNEIKKVCV…SWHYGPFELL (384 aa). An enoyl-CoA hydratase/isomerase region spans residues 453–720; it reads FVITTKMNSL…TIEKLQAIVG (268 aa).

This sequence in the N-terminal section; belongs to the 3-hydroxyacyl-CoA dehydrogenase family. The protein in the C-terminal section; belongs to the enoyl-CoA hydratase/isomerase family.

It carries out the reaction a (3S)-3-hydroxyacyl-CoA + NAD(+) = a 3-oxoacyl-CoA + NADH + H(+). The enzyme catalyses a (3S)-3-hydroxyacyl-CoA = a (2E)-enoyl-CoA + H2O. It catalyses the reaction a 4-saturated-(3S)-3-hydroxyacyl-CoA = a (3E)-enoyl-CoA + H2O. The catalysed reaction is a (3Z)-enoyl-CoA = a 4-saturated (2E)-enoyl-CoA. It carries out the reaction a (3E)-enoyl-CoA = a 4-saturated (2E)-enoyl-CoA. This chain is Putative fatty acid oxidation complex trifunctional enzyme, found in Rickettsia prowazekii (strain Madrid E).